Consider the following 333-residue polypeptide: Foldase protein PrsA (333 aa).

An N-terminal signal peptide occupies residues 1 to 21 (MKKRTIATGLVTLLSIVTLAA). Cys-22 carries N-palmitoyl cysteine lipidation. Cys-22 carries the S-diacylglycerol cysteine lipid modification. The PpiC domain maps to 144–237 (KPEVTAQVIQ…PVYYIVKITK (94 aa)). The segment at 296-333 (AASGSGSSGSTTTTTAASSAATTAADDQTTAAETTAAE) is disordered.

Belongs to the PrsA family.

Its subcellular location is the cell membrane. It catalyses the reaction [protein]-peptidylproline (omega=180) = [protein]-peptidylproline (omega=0). In terms of biological role, plays a major role in protein secretion by helping the post-translocational extracellular folding of several secreted proteins. The chain is Foldase protein PrsA from Streptococcus mutans serotype c (strain ATCC 700610 / UA159).